The chain runs to 533 residues: Protein mono-ADP-ribosyltransferase PARP3 (533 aa).

The segment at 1-30 (MAPKRKASVQTEGSKKRRQGTEEEDSFRST) is disordered. Lysine 6 is subject to N6-(ADP-ribosyl)lysine. The residue at position 12 (glutamate 12) is an ADP-ribosyl glutamic acid. A Nuclear localization signal motif is present at residues 14–18 (SKKRR). An ADP-ribosyl glutamic acid mark is found at glutamate 24 and glutamate 32. The region spanning 57-147 (GIQVHEDYDC…DRFVAQPNKY (91 aa)) is the WGR domain. Aspartate 138 is subject to ADP-ribosyl aspartic acid. An ADP-ribosyl glutamic acid mark is found at glutamate 160, glutamate 230, glutamate 309, and glutamate 310. The region spanning 181–299 (PCSLDPATQN…DIELAQTLQA (119 aa)) is the PARP alpha-helical domain. A PARP catalytic domain is found at 313–533 (HPLDRDYQLL…RLRYLLEIHL (221 aa)).

It belongs to the ARTD/PARP family. Interacts with PARP1; leading to activate PARP1 in absence of DNA. Interacts with PRKDC. Interacts with XRCC5/Ku80; the interaction is dependent on nucleic acids. Interacts with XRCC6/Ku70; the interaction is dependent on nucleic acids. Interacts with EZH2, HDAC1, HDAC2, SUZ12, YY1, LRIG3 and LIG4. Auto-ADP-ribosylated.

The protein localises to the nucleus. It is found in the chromosome. Its subcellular location is the cytoplasm. It localises to the cytoskeleton. The protein resides in the microtubule organizing center. The protein localises to the centrosome. It is found in the centriole. It catalyses the reaction L-aspartyl-[protein] + NAD(+) = 4-O-(ADP-D-ribosyl)-L-aspartyl-[protein] + nicotinamide. The catalysed reaction is L-glutamyl-[protein] + NAD(+) = 5-O-(ADP-D-ribosyl)-L-glutamyl-[protein] + nicotinamide. It carries out the reaction L-lysyl-[protein] + NAD(+) = N(6)-(ADP-D-ribosyl)-L-lysyl-[protein] + nicotinamide + H(+). Mono-ADP-ribosyltransferase that mediates mono-ADP-ribosylation of target proteins and plays a key role in the response to DNA damage. Mediates mono-ADP-ribosylation of glutamate, aspartate or lysine residues on target proteins. In contrast to PARP1 and PARP2, it is not able to mediate poly-ADP-ribosylation. Involved in DNA repair by mediating mono-ADP-ribosylation of a limited number of acceptor proteins involved in chromatin architecture and in DNA metabolism, such as histone H2B, XRCC5 and XRCC6. ADP-ribosylation follows DNA damage and appears as an obligatory step in a detection/signaling pathway leading to the reparation of DNA strand breaks. Involved in single-strand break repair by catalyzing mono-ADP-ribosylation of histone H2B on 'Glu-2' (H2BE2ADPr) of nucleosomes containing nicked DNA. Cooperates with the XRCC5-XRCC6 (Ku80-Ku70) heterodimer to limit end-resection thereby promoting accurate NHEJ. Suppresses G-quadruplex (G4) structures in response to DNA damage. Associates with a number of DNA repair factors and is involved in the response to exogenous and endogenous DNA strand breaks. Together with APLF, promotes the retention of the LIG4-XRCC4 complex on chromatin and accelerate DNA ligation during non-homologous end-joining (NHEJ). May link the DNA damage surveillance network to the mitotic fidelity checkpoint. Acts as a negative regulator of immunoglobulin class switch recombination, probably by controlling the level of AICDA /AID on the chromatin. In addition to proteins, also able to ADP-ribosylate DNA: mediates DNA mono-ADP-ribosylation of DNA strand break termini via covalent addition of a single ADP-ribose moiety to a 5'- or 3'-terminal phosphate residues in DNA containing multiple strand breaks. The chain is Protein mono-ADP-ribosyltransferase PARP3 from Mus musculus (Mouse).